The sequence spans 340 residues: 4-amino-5-hydroxymethyl-2-methylpyrimidine phosphate synthase THI13 (340 aa).

K62 is modified (N6-(pyridoxal phosphate)lysine). H66 is an active-site residue. 115 to 118 (GEFG) is a binding site for pyridoxal 5'-phosphate. A CCCFC; essential for catalytic activity, may be the site of iron coordination motif is present at residues 195–199 (CCCFC).

It belongs to the NMT1/THI5 family. As to quaternary structure, homodimer. Fe cation is required as a cofactor.

The catalysed reaction is N(6)-(pyridoxal phosphate)-L-lysyl-[4-amino-5-hydroxymethyl-2-methylpyrimidine phosphate synthase] + L-histidyl-[4-amino-5-hydroxymethyl-2-methylpyrimidine phosphate synthase] + 2 Fe(3+) + 4 H2O = L-lysyl-[4-amino-5-hydroxymethyl-2-methylpyrimidine phosphate synthase] + (2S)-2-amino-5-hydroxy-4-oxopentanoyl-[4-amino-5-hydroxymethyl-2-methylpyrimidine phosphate synthase] + 4-amino-2-methyl-5-(phosphooxymethyl)pyrimidine + 3-oxopropanoate + 2 Fe(2+) + 2 H(+). The protein operates within cofactor biosynthesis; thiamine diphosphate biosynthesis. Responsible for the formation of the pyrimidine heterocycle in the thiamine biosynthesis pathway. Catalyzes the formation of hydroxymethylpyrimidine phosphate (HMP-P) from histidine and pyridoxal phosphate (PLP). The protein uses PLP and the active site histidine to form HMP-P, generating an inactive enzyme. The enzyme can only undergo a single turnover, which suggests it is a suicide enzyme. This is 4-amino-5-hydroxymethyl-2-methylpyrimidine phosphate synthase THI13 from Saccharomyces cerevisiae (strain ATCC 204508 / S288c) (Baker's yeast).